We begin with the raw amino-acid sequence, 78 residues long: MASLIQVRDLLALRGRMEAAQISQTLNTPQPMINAMLKQLESMGKAVRIQEEPDGCLSGSCKSCPEGKACLHEWWALR.

Residues cysteine 56, cysteine 61, cysteine 64, and cysteine 70 each coordinate iron-sulfur cluster.

It belongs to the FeoC family.

Its function is as follows. May function as a transcriptional regulator that controls feoABC expression. This is Probable [Fe-S]-dependent transcriptional repressor from Escherichia coli (strain UTI89 / UPEC).